We begin with the raw amino-acid sequence, 468 residues long: Phosphoglucosamine mutase (468 aa).

The active-site Phosphoserine intermediate is Ser-112. Mg(2+) contacts are provided by Ser-112, Asp-254, Asp-256, and Asp-258. Ser-112 carries the post-translational modification Phosphoserine.

It belongs to the phosphohexose mutase family. It depends on Mg(2+) as a cofactor. Post-translationally, activated by phosphorylation.

The enzyme catalyses alpha-D-glucosamine 1-phosphate = D-glucosamine 6-phosphate. Catalyzes the conversion of glucosamine-6-phosphate to glucosamine-1-phosphate. This Prochlorococcus marinus (strain MIT 9303) protein is Phosphoglucosamine mutase.